The primary structure comprises 258 residues: Proteasome subunit alpha (258 aa).

It belongs to the peptidase T1A family. As to quaternary structure, the 20S proteasome core is composed of 14 alpha and 14 beta subunits that assemble into four stacked heptameric rings, resulting in a barrel-shaped structure. The two inner rings, each composed of seven catalytic beta subunits, are sandwiched by two outer rings, each composed of seven alpha subunits. The catalytic chamber with the active sites is on the inside of the barrel. Has a gated structure, the ends of the cylinder being occluded by the N-termini of the alpha-subunits. Is capped at one or both ends by the proteasome regulatory ATPase, PAN.

The protein resides in the cytoplasm. With respect to regulation, the formation of the proteasomal ATPase PAN-20S proteasome complex, via the docking of the C-termini of PAN into the intersubunit pockets in the alpha-rings, triggers opening of the gate for substrate entry. Interconversion between the open-gate and close-gate conformations leads to a dynamic regulation of the 20S proteasome proteolysis activity. Functionally, component of the proteasome core, a large protease complex with broad specificity involved in protein degradation. The polypeptide is Proteasome subunit alpha (Aeropyrum pernix (strain ATCC 700893 / DSM 11879 / JCM 9820 / NBRC 100138 / K1)).